The primary structure comprises 206 residues: Large ribosomal subunit protein bL9 (206 aa).

Residues 182–206 (FAENQQKALAKEMNDNDANSINEEA) form a disordered region. The segment covering 197-206 (NDANSINEEA) has biased composition (polar residues).

The protein belongs to the bacterial ribosomal protein bL9 family.

Its function is as follows. Binds to the 23S rRNA. The chain is Large ribosomal subunit protein bL9 from Bartonella henselae (strain ATCC 49882 / DSM 28221 / CCUG 30454 / Houston 1) (Rochalimaea henselae).